We begin with the raw amino-acid sequence, 189 residues long: Apolipoprotein D (189 aa).

Positions 1–20 (MATMLLLLATLAGLFTTTEG) are cleaved as a signal peptide. Q21 bears the Pyrrolidone carboxylic acid mark. 2 cysteine pairs are disulfide-bonded: C28-C134 and C61-C185. N65 and N98 each carry an N-linked (GlcNAc...) asparagine glycan.

This sequence belongs to the calycin superfamily. Lipocalin family. Homodimer. Expressed in liver, kidney, bladder, adrenal, cerebrum, duodenum, testis, lung, spleen, pancreas, heart and skin.

The protein localises to the secreted. Functionally, APOD occurs in the macromolecular complex with lecithin-transport and binding of bilin. Appears to be able to transport a variety of ligands in a number of different contexts. The polypeptide is Apolipoprotein D (Apod) (Rattus norvegicus (Rat)).